A 175-amino-acid polypeptide reads, in one-letter code: UPF0398 protein SSA_1858 (175 aa).

Belongs to the UPF0398 family.

This Streptococcus sanguinis (strain SK36) protein is UPF0398 protein SSA_1858.